The sequence spans 786 residues: Polyribonucleotide nucleotidyltransferase (786 aa).

2 residues coordinate Mg(2+): Asp516 and Asp522. One can recognise a KH domain in the interval Pro582–Val641. In terms of domain architecture, S1 motif spans Gly653–Val722. Residues Val722–Ser786 form a disordered region. The segment covering Ala727–Arg738 has biased composition (low complexity). Residues Pro739–Arg778 show a composition bias toward basic and acidic residues.

It belongs to the polyribonucleotide nucleotidyltransferase family. Mg(2+) serves as cofactor.

It localises to the cytoplasm. The catalysed reaction is RNA(n+1) + phosphate = RNA(n) + a ribonucleoside 5'-diphosphate. Its function is as follows. Involved in mRNA degradation. Catalyzes the phosphorolysis of single-stranded polyribonucleotides processively in the 3'- to 5'-direction. The chain is Polyribonucleotide nucleotidyltransferase from Salinispora arenicola (strain CNS-205).